A 114-amino-acid polypeptide reads, in one-letter code: Ribonuclease P protein component (114 aa).

This sequence belongs to the RnpA family. Consists of a catalytic RNA component (M1 or rnpB) and a protein subunit.

It catalyses the reaction Endonucleolytic cleavage of RNA, removing 5'-extranucleotides from tRNA precursor.. Functionally, RNaseP catalyzes the removal of the 5'-leader sequence from pre-tRNA to produce the mature 5'-terminus. It can also cleave other RNA substrates such as 4.5S RNA. The protein component plays an auxiliary but essential role in vivo by binding to the 5'-leader sequence and broadening the substrate specificity of the ribozyme. The chain is Ribonuclease P protein component from Legionella pneumophila (strain Paris).